A 73-amino-acid chain; its full sequence is Large ribosomal subunit protein bL31 (73 aa).

Belongs to the bacterial ribosomal protein bL31 family. Type A subfamily. Part of the 50S ribosomal subunit.

Binds the 23S rRNA. This Rhizobium johnstonii (strain DSM 114642 / LMG 32736 / 3841) (Rhizobium leguminosarum bv. viciae) protein is Large ribosomal subunit protein bL31.